The following is a 376-amino-acid chain: Succinate--CoA ligase [ADP-forming] subunit beta (376 aa).

The 226-residue stretch at 9-234 folds into the ATP-grasp domain; sequence KAIAKKYGIP…ERELSELEKE (226 aa). Residues K45, 52–54, E91, E94, and E99 each bind ATP; that span reads GRG. Positions 191 and 204 each coordinate Mg(2+). Substrate is bound by residues N254 and 311–313; that span reads GIT.

The protein belongs to the succinate/malate CoA ligase beta subunit family. In terms of assembly, heterotetramer of two alpha and two beta subunits. Requires Mg(2+) as cofactor.

It catalyses the reaction succinate + ATP + CoA = succinyl-CoA + ADP + phosphate. The catalysed reaction is GTP + succinate + CoA = succinyl-CoA + GDP + phosphate. It participates in carbohydrate metabolism; tricarboxylic acid cycle; succinate from succinyl-CoA (ligase route): step 1/1. In terms of biological role, succinyl-CoA synthetase functions in the citric acid cycle (TCA), coupling the hydrolysis of succinyl-CoA to the synthesis of either ATP or GTP and thus represents the only step of substrate-level phosphorylation in the TCA. The beta subunit provides nucleotide specificity of the enzyme and binds the substrate succinate, while the binding sites for coenzyme A and phosphate are found in the alpha subunit. The sequence is that of Succinate--CoA ligase [ADP-forming] subunit beta from Ignicoccus hospitalis (strain KIN4/I / DSM 18386 / JCM 14125).